A 247-amino-acid polypeptide reads, in one-letter code: MADS-box protein defh21 (247 aa).

Positions methionine 1–proline 61 constitute an MADS-box domain. The region spanning asparagine 91 to glutamine 183 is the K-box domain.

As to expression, expressed exclusively in a few inner cell layers of the inner integuments of the ovules.

Its subcellular location is the nucleus. Probable transcription factor. The protein is MADS-box protein defh21 (DEFH21) of Antirrhinum majus (Garden snapdragon).